A 199-amino-acid chain; its full sequence is Transgelin-2 (199 aa).

N-acetylalanine is present on A2. At S11 the chain carries Phosphoserine. K17 and K20 each carry N6-acetyllysine. Positions 24–136 constitute a Calponin-homology (CH) domain; the sequence is ADLEQILIQW…RTLMNLGGLA (113 aa). Residue S163 is modified to Phosphoserine. K171 participates in a covalent cross-link: Glycyl lysine isopeptide (Lys-Gly) (interchain with G-Cter in SUMO2). A Calponin-like repeat occupies 174–199; it reads IGLQMGTNRGASQAGMTGYGMPRQIL. Phosphothreonine is present on T180. Residues R182 and R196 each carry the omega-N-methylarginine modification.

It belongs to the calponin family. Expressed in epididymis (at protein level).

The polypeptide is Transgelin-2 (TAGLN2) (Homo sapiens (Human)).